Consider the following 554-residue polypeptide: CTP synthase (554 aa).

Positions 1-265 are amidoligase domain; the sequence is MTPLIFVTGG…DEIVIDQFKL (265 aa). S13 serves as a coordination point for CTP. S13 contacts UTP. ATP is bound by residues 14-19 and D71; that span reads SLGKGI. Mg(2+) is bound by residues D71 and E139. CTP-binding positions include 146–148, 186–191, and K222; these read DIE and KTKPTQ. UTP-binding positions include 186 to 191 and K222; that span reads KTKPTQ. Residues 292–545 form the Glutamine amidotransferase type-1 domain; it reads TIAVVGKYVD…VKASRARKAG (254 aa). Residue G353 participates in L-glutamine binding. C380 acts as the Nucleophile; for glutamine hydrolysis in catalysis. L-glutamine-binding positions include 381 to 384, E404, and R471; that span reads YGMQ. Catalysis depends on residues H518 and E520.

It belongs to the CTP synthase family. In terms of assembly, homotetramer.

The enzyme catalyses UTP + L-glutamine + ATP + H2O = CTP + L-glutamate + ADP + phosphate + 2 H(+). It catalyses the reaction L-glutamine + H2O = L-glutamate + NH4(+). The catalysed reaction is UTP + NH4(+) + ATP = CTP + ADP + phosphate + 2 H(+). It functions in the pathway pyrimidine metabolism; CTP biosynthesis via de novo pathway; CTP from UDP: step 2/2. Allosterically activated by GTP, when glutamine is the substrate; GTP has no effect on the reaction when ammonia is the substrate. The allosteric effector GTP functions by stabilizing the protein conformation that binds the tetrahedral intermediate(s) formed during glutamine hydrolysis. Inhibited by the product CTP, via allosteric rather than competitive inhibition. Functionally, catalyzes the ATP-dependent amination of UTP to CTP with either L-glutamine or ammonia as the source of nitrogen. Regulates intracellular CTP levels through interactions with the four ribonucleotide triphosphates. The protein is CTP synthase of Xylella fastidiosa (strain M23).